A 25-amino-acid polypeptide reads, in one-letter code: Androctonin (25 aa).

2 disulfides stabilise this stretch: Cys4-Cys20 and Cys10-Cys16.

The protein resides in the secreted. Active against both bacteria (Gram-positive and Gram-negative) and filamentous fungi. Acts on the membrane of the bacterial cells. It destabilize a membrane by modifying its properties. The sequence is that of Androctonin from Androctonus australis (Sahara scorpion).